The following is a 177-amino-acid chain: Large ribosomal subunit protein uL22 (177 aa).

The segment at 118-177 is disordered; it reads VESRPSREGRRGGAGESAGGARARRAQGSKAAAAKKAPASSSKKAATTTEASEEAKGGSQ. Basic and acidic residues predominate over residues 121 to 130; that stretch reads RPSREGRRGG. Over residues 145-167 the composition is skewed to low complexity; sequence GSKAAAAKKAPASSSKKAATTTE.

This sequence belongs to the universal ribosomal protein uL22 family. Part of the 50S ribosomal subunit.

This protein binds specifically to 23S rRNA; its binding is stimulated by other ribosomal proteins, e.g. L4, L17, and L20. It is important during the early stages of 50S assembly. It makes multiple contacts with different domains of the 23S rRNA in the assembled 50S subunit and ribosome. In terms of biological role, the globular domain of the protein is located near the polypeptide exit tunnel on the outside of the subunit, while an extended beta-hairpin is found that lines the wall of the exit tunnel in the center of the 70S ribosome. This chain is Large ribosomal subunit protein uL22, found in Mycobacterium sp. (strain KMS).